The chain runs to 336 residues: Cytosolic 5'-nucleotidase 3A (336 aa).

Catalysis depends on D88, which acts as the Nucleophile. Mg(2+) is bound by residues D88 and D90. D90 acts as the Proton donor in catalysis. Position 135 (E135) interacts with CMP. The N(7)-methyl-GMP site is built by E135 and S156. Substrate is bound by residues 203–204 (SA) and K252. D277 provides a ligand contact to Mg(2+). S278 carries the post-translational modification Phosphoserine.

Belongs to the pyrimidine 5'-nucleotidase family. In terms of assembly, monomer. As to expression, isoforms 1, 3 and 4 are expressed in reticulocytes. Isoform 4 is hardly detectable in bone marrow and fetal liver.

Its subcellular location is the cytoplasm. It localises to the endoplasmic reticulum. The enzyme catalyses N(7)-methyl-GMP + H2O = N(7)-methylguanosine + phosphate. The catalysed reaction is CMP + H2O = cytidine + phosphate. It carries out the reaction a ribonucleoside 5'-phosphate + H2O = a ribonucleoside + phosphate. In terms of biological role, nucleotidase which shows specific activity towards cytidine monophosphate (CMP) and 7-methylguanosine monophosphate (m(7)GMP). CMP seems to be the preferred substrate. The chain is Cytosolic 5'-nucleotidase 3A (NT5C3A) from Homo sapiens (Human).